The following is a 248-amino-acid chain: 14-3-3-like protein G-BOX factor 14 lambda (248 aa).

A phosphoserine; by CRPK1 mark is found at serine 70, serine 112, and serine 193. Threonine 214 carries the phosphothreonine; by CRPK1 modification.

The protein belongs to the 14-3-3 family. In terms of assembly, interacts with SERK1 in the cell membrane. Component of the SERK1 signaling complex, composed of KAPP, CDC48A, GRF6 or GRF7, SERK1, SERK2, SERK3/BAK1 and BRI1. Interacts with TPK1. Interacts with ADF1. Binds to CRPK1 at the plasma membrane. Interacts with DREB1A and DREB1B in the nucleus when activated by CRPK1-mediated phosphorylation upon freezing. Interacts with CINV1. Binds to the N-terminal region of B1L. In terms of processing, transphosphorylated by SERK1. Phosphorylated by CRPK1 in response to cold.

The protein resides in the nucleus. The protein localises to the cell membrane. Its subcellular location is the cytoplasm. Its function is as follows. Is associated with a DNA binding complex that binds to the G box, a well-characterized cis-acting DNA regulatory element found in plant genes. Specific negative regulator of slow-vacuolar (SV) ion channel. Mediates F-actin dynamics possibly through inhibiting ADF1 phosphorylation. Negative regulator of freezing tolerance that modulates cold-responsive C-repeat-binding factors (CBF) DREB1A and DREB1B proteins stability by facilitating their ubiquitin-mediated degradation when activated by CRPK1-mediated phosphorylation in freezing conditions; this processus is counteracted by B1L. The chain is 14-3-3-like protein G-BOX factor 14 lambda from Arabidopsis thaliana (Mouse-ear cress).